A 200-amino-acid chain; its full sequence is 3-isopropylmalate dehydratase small subunit (200 aa).

Belongs to the LeuD family. LeuD type 1 subfamily. Heterodimer of LeuC and LeuD.

The catalysed reaction is (2R,3S)-3-isopropylmalate = (2S)-2-isopropylmalate. The protein operates within amino-acid biosynthesis; L-leucine biosynthesis; L-leucine from 3-methyl-2-oxobutanoate: step 2/4. Functionally, catalyzes the isomerization between 2-isopropylmalate and 3-isopropylmalate, via the formation of 2-isopropylmaleate. The sequence is that of 3-isopropylmalate dehydratase small subunit from Proteus mirabilis (strain HI4320).